Here is a 541-residue protein sequence, read N- to C-terminus: Eukaryotic translation initiation factor 3 subunit E (541 aa).

A PCI domain is found at Val252–Pro443. The tract at residues Ala466–Asn541 is disordered. The span at Asn490–Asn502 shows a compositional bias: gly residues. Residues Gln506–Glu522 show a composition bias toward basic and acidic residues. Residues Ser523–Asn541 show a composition bias toward low complexity.

The protein belongs to the eIF-3 subunit E family. As to quaternary structure, component of the eukaryotic translation initiation factor 3 (eIF-3) complex.

It is found in the cytoplasm. Its function is as follows. Component of the eukaryotic translation initiation factor 3 (eIF-3) complex, which is involved in protein synthesis of a specialized repertoire of mRNAs and, together with other initiation factors, stimulates binding of mRNA and methionyl-tRNAi to the 40S ribosome. The eIF-3 complex specifically targets and initiates translation of a subset of mRNAs involved in cell proliferation. This Mycosarcoma maydis (Corn smut fungus) protein is Eukaryotic translation initiation factor 3 subunit E.